The chain runs to 82 residues: Turripeptide IX-23 (82 aa).

A signal peptide spans 1–23 (MMAKLMITVMMVLLLSLQQGADG). Positions 24–50 (RSERWRKNQMAASSIMRNLITARIDPP) are excised as a propeptide. Cystine bridges form between cysteine 53-cysteine 68, cysteine 58-cysteine 72, and cysteine 64-cysteine 79.

It belongs to the Pg turripeptide superfamily. In terms of tissue distribution, expressed by the venom duct.

The protein resides in the secreted. This is Turripeptide IX-23 from Gemmula speciosa (Splendid gem-turris).